The primary structure comprises 105 residues: Flagellar transcriptional regulator FlhD (105 aa).

Belongs to the FlhD family. Homodimer; disulfide-linked. Forms a heterohexamer composed of two FlhC and four FlhD subunits. Each FlhC binds a FlhD dimer, forming a heterotrimer, and a hexamer assembles by dimerization of two heterotrimers.

Its subcellular location is the cytoplasm. Functionally, functions in complex with FlhC as a master transcriptional regulator that regulates transcription of several flagellar and non-flagellar operons by binding to their promoter region. Activates expression of class 2 flagellar genes, including fliA, which is a flagellum-specific sigma factor that turns on the class 3 genes. Also regulates genes whose products function in a variety of physiological pathways. This is Flagellar transcriptional regulator FlhD from Ralstonia pickettii (strain 12J).